The primary structure comprises 344 residues: Heat-inducible transcription repressor HrcA (344 aa).

This sequence belongs to the HrcA family.

Its function is as follows. Negative regulator of class I heat shock genes (grpE-dnaK-dnaJ and groELS operons). Prevents heat-shock induction of these operons. The sequence is that of Heat-inducible transcription repressor HrcA from Moorella thermoacetica (strain ATCC 39073 / JCM 9320).